A 65-amino-acid chain; its full sequence is Metallothionein-3 (65 aa).

An N-acetylmethionine modification is found at methionine 1. The interval 1–30 (MDPEACPCPTGGSCTCSDSCKCEGCTCASS) is beta. The a divalent metal cation site is built by cysteine 6, cysteine 8, cysteine 14, cysteine 16, cysteine 20, cysteine 22, cysteine 25, and cysteine 27. The alpha stretch occupies residues 31–65 (KKSCCPAECEKCAKDCVCKGGEGAEAEEKKCGCCQ). Phosphoserine is present on serine 33. 9 residues coordinate a divalent metal cation: cysteine 34, cysteine 35, cysteine 39, cysteine 42, cysteine 46, cysteine 48, cysteine 61, cysteine 63, and cysteine 64.

The protein belongs to the metallothionein superfamily. Type 1 family.

Binds heavy metals. Contains five zinc and one copper atoms per polypeptide chain and only a negligible amount of cadmium. This is Metallothionein-3 (MT3) from Ovis aries (Sheep).